Reading from the N-terminus, the 358-residue chain is COP9 signalosome complex subunit 5b (358 aa).

N-acetylmethionine is present on Met-1. The 138-residue stretch at 59-196 (VKISALALLK…IGAFRTYSKG (138 aa)) folds into the MPN domain. 3 residues coordinate Zn(2+): His-142, His-144, and Asp-155. The JAMM motif signature appears at 142-155 (HSHPGYGCWLSGID). Positions 338–349 (MRQSNNKSPTDS) are enriched in polar residues. Residues 338 to 358 (MRQSNNKSPTDSSDPDPMITY) are disordered.

The protein belongs to the peptidase M67A family. CSN5 subfamily. As to quaternary structure, component of the CSN complex, probably composed of CSN1, CSN2, CSN3, CSN4, CSN5 (CSN5A or CSN5B), CSN6 (CSN6A or CSN6B), CSN7 and CSN8. CSN5A or CSN5B are present within distinct CSN complexes each containing only one copy of CSN5. Interacts with itself. In the complex, it is located in the center and probably interacts directly with CSN4 and CSN6A or CSN6B. Also exists as monomeric form. Interacts with CYT1 in vitro and in planta. Interacts with FLZ3. A divalent metal cation serves as cofactor. As to expression, ubiquitously expressed. Highly expressed in flowers and roots. Expressed at lower level in seedlings and siliques.

The protein resides in the cytoplasm. It localises to the nucleus. Functionally, probable protease subunit of the COP9 signalosome complex (CSN), a complex involved in various cellular and developmental processes such as photomorphogenesis and auxin and jasmonate responses. The CSN complex is an essential regulator of the ubiquitin (Ubl) conjugation pathway by mediating the deneddylation of the cullin subunits of the SCF-type E3 ligase complexes, leading to decrease the Ubl ligase activity of SCF. In the complex, it probably acts as the catalytic center that mediates the cleavage of Nedd8 from cullins. It however has no metalloprotease activity by itself and requires the other subunits of the CSN complex. The CSN complex is involved in repression of photomorphogenesis in darkness by regulating the activity of COP1-containing Ubl ligase complexes. The complex is also required for degradation of PSIAA6 by regulating the activity of the Ubl ligase SCF-TIR complex. Not involved in CSN's deneddylation/derubylation activity. Essential for the structural integrity of the CSN holocomplex. The protein is COP9 signalosome complex subunit 5b of Arabidopsis thaliana (Mouse-ear cress).